The sequence spans 300 residues: Cation-efflux pump FieF (300 aa).

A helical membrane pass occupies residues Leu-24–Val-44. The Zn(2+) site is built by Asp-45 and Asp-49. Transmembrane regions (helical) follow at residues Ala-82 to Ile-102 and Ala-114 to Phe-134. Residues His-153 and Asp-157 each coordinate Zn(2+). A run of 2 helical transmembrane segments spans residues Ser-156–His-176 and Ala-178–Gly-198.

Belongs to the cation diffusion facilitator (CDF) transporter (TC 2.A.4) family. FieF subfamily. As to quaternary structure, homodimer.

The protein localises to the cell inner membrane. The enzyme catalyses Zn(2+)(in) + H(+)(out) = Zn(2+)(out) + H(+)(in). It carries out the reaction Cd(2+)(in) + H(+)(out) = Cd(2+)(out) + H(+)(in). The catalysed reaction is Fe(2+)(in) + H(+)(out) = Fe(2+)(out) + H(+)(in). In terms of biological role, divalent metal cation transporter which exports Zn(2+), Cd(2+) and possibly Fe(2+). May be involved in zinc and iron detoxification by efflux. This chain is Cation-efflux pump FieF, found in Klebsiella pneumoniae subsp. pneumoniae (strain ATCC 700721 / MGH 78578).